The primary structure comprises 302 residues: Protein MGF 110-11L (302 aa).

A helical transmembrane segment spans residues 26–46; that stretch reads PFGCNMKGLGVLLGLFSLILA. Residue Asn-97 is glycosylated (N-linked (GlcNAc...) asparagine; by host). 2 consecutive transmembrane segments (helical) span residues 154–174 and 183–203; these read LTLKQYCLYFIISIAFAGCFV and LNTTIKLLTLLSILVYLAQPV. An N-linked (GlcNAc...) asparagine; by host glycan is attached at Asn-294.

The protein belongs to the asfivirus MGF 110 family.

It localises to the host membrane. Plays a role in virus cell tropism, and may be required for efficient virus replication in macrophages. The chain is Protein MGF 110-11L from African swine fever virus (isolate Tick/South Africa/Pretoriuskop Pr4/1996) (ASFV).